The primary structure comprises 365 residues: Transcription elongation factor, mitochondrial (365 aa).

The N-terminal 40 residues, 1–40, are a transit peptide targeting the mitochondrion; it reads MAWRANLACLIKAGGRTRWFPLPEYLSMSPVLHNTCSRRK.

This sequence belongs to the TEFM family. In terms of assembly, interacts with POLRMT.

The protein resides in the mitochondrion matrix. It is found in the mitochondrion nucleoid. Its function is as follows. Transcription elongation factor which increases mitochondrial RNA polymerase processivity. Regulates transcription of the mitochondrial genome, including genes important for the oxidative phosphorylation machinery. In Rattus norvegicus (Rat), this protein is Transcription elongation factor, mitochondrial (Tefm).